A 258-amino-acid polypeptide reads, in one-letter code: Thyroxine 5-deiodinase (258 aa).

Residues 1 to 20 form a helical; Signal-anchor for type II membrane protein membrane-spanning segment; sequence AACILLFPRFLLTAVMLWLL. Residues 21–258 are Extracellular-facing; that stretch reads DFLCIRKKML…QSPGAVVIQV (238 aa). Residue Sec-122 is part of the active site. Sec-122 is a non-standard amino acid (selenocysteine).

This sequence belongs to the iodothyronine deiodinase family. In terms of assembly, monomer. Homodimer. May undergo minor heretodimerization with DIO1 and DIO2.

It is found in the cell membrane. It localises to the endosome membrane. The enzyme catalyses 3,3',5'-triiodo-L-thyronine + iodide + A + H(+) = L-thyroxine + AH2. It carries out the reaction 3,3'-diiodo-L-thyronine + iodide + A + H(+) = 3,3',5-triiodo-L-thyronine + AH2. It catalyses the reaction 3-iodo-L-thyronine + iodide + A + H(+) = 3,5-diiodo-L-thyronine + AH2. The catalysed reaction is L-thyronine + iodide + A + H(+) = 3-iodo-L-thyronine + AH2. The enzyme catalyses 3',5'-diiodo-L-thyronine + iodide + A + H(+) = 3,3',5'-triiodo-L-thyronine + AH2. It carries out the reaction 3'-iodo-L-thyronine + iodide + A + H(+) = 3,3'-diiodo-L-thyronine + AH2. It catalyses the reaction 3,3',5'-triiodothyronamine + iodide + A + H(+) = 3,3',5,5'-tetraiodothyronamine + AH2. The catalysed reaction is 3',5'-diiodothyronamine + iodide + A + H(+) = 3,3',5'-triiodothyronamine + AH2. The enzyme catalyses 3,3'-diiodothyronamine + iodide + A + H(+) = 3,3',5-triiodothyronamine + AH2. It carries out the reaction 3-iodothyronamine + iodide + A + H(+) = 3,5-diiodothyronamine + AH2. It catalyses the reaction 3'-iodothyronamine + iodide + A + H(+) = 3,3'-diiodothyronamine + AH2. The catalysed reaction is thyronamine + iodide + A + H(+) = 3-iodothyronamine + AH2. In terms of biological role, plays a crucial role in the metabolism of thyroid hormones (TH) and has specific roles in TH activation and inactivation by deiodination. Catalyzes the deiodination of L-thyroxine (T4) to 3,3',5'-triiodothyronine (rT3) and 3,5,3'-triiodothyronine (T3) to 3,3'-diiodothyronine (3,3'-T2) via inner-ring deiodination (IRD). Catalyzes the deiodination of rT3 to 3',5'-diiodothyronine (3',5'-T2), 3,3'-T2 to 3'-monoiodothyronine (3'-T1) and 3,5-diiodothyronine (3,5-T2) to 3-monoiodothyronine (3-T1) via IRD. Catalyzes the deiodination of 3-T1 to L-thyronine (T0) via outer-ring deiodination (ORD). Catalyzes the tyrosyl ring deiodinations of 3,3',5,5'-tetraiodothyronamine, 3,3',5'-triiodothyronamine, 3,5,3'-triiodothyronamine, 3,5-diiodothyronamine, 3,3'-diiodothyronamine and 3-iodothyronamine. The chain is Thyroxine 5-deiodinase (DIO3) from Gallus gallus (Chicken).